A 279-amino-acid polypeptide reads, in one-letter code: Epidermal growth factor-like protein 7 (279 aa).

The signal sequence occupies residues 1–21 (MWGSGELLVAWFLVLAAGGTT). An EMI domain is found at 28-109 (SRRVCTVGVS…TNGLPGACGA (82 aa)). Intrachain disulfides connect Cys32–Cys94, Cys57–Cys63, Cys93–Cys107, Cys112–Cys122, Cys116–Cys128, Cys130–Cys139, Cys146–Cys157, Cys153–Cys166, and Cys168–Cys181. An EGF-like 1 domain is found at 108–140 (GAAICQPPCGNEGSCIRPGRCRCPVGWQGDTCQ). The Cell attachment site signature appears at 131-133 (PVG). Residues 142 to 182 (DVDECSTGEARCPQRCVNTVGSYWCQCWEGQSPSADGVLCL) form the EGF-like 2; calcium-binding domain. Coiled coils occupy residues 200-224 (SVVR…QLVL) and 250-274 (FQQL…GSCS).

Interacts with ITGAV/ITGB3 in an RGD-dependent manner, increasing endothelial cell's motility.

It localises to the secreted. The protein localises to the extracellular space. In terms of biological role, regulates vascular tubulogenesis in vivo. Inhibits platelet-derived growth factor (PDGF)-BB-induced smooth muscle cell migration and promotes endothelial cell adhesion to the extracellular matrix and angiogenesis. In Rattus norvegicus (Rat), this protein is Epidermal growth factor-like protein 7 (Egfl7).